The following is a 761-amino-acid chain: Protein PHTF1 (761 aa).

The region spanning Arg6 to Ile150 is the PHTF domain. 3 consecutive transmembrane segments (helical) span residues Gly77–Leu97, Ile99–Leu119, and Pro121–Val141. Positions Arg152–Lys184 are disordered. Over residues Asn170–Ser181 the composition is skewed to low complexity. Residues Asn179 and Asn224 are each glycosylated (N-linked (GlcNAc...) asparagine). A phosphoserine mark is found at Ser272, Ser276, Ser277, Ser333, and Ser335. The disordered stretch occupies residues Val345 to Asp414. The segment covering Ser347–Leu363 has biased composition (low complexity). An N-linked (GlcNAc...) asparagine glycan is attached at Asn362. Residues Ser364–Ser375 show a composition bias toward basic and acidic residues. Asn430 carries an N-linked (GlcNAc...) asparagine glycan. The next 4 helical transmembrane spans lie at Gly472–Leu492, Thr514–Ile534, Val610–Val630, and Trp644–Gly664. Asn673 and Asn732 each carry an N-linked (GlcNAc...) asparagine glycan. The chain crosses the membrane as a helical span at residues Val736–Leu756.

As to quaternary structure, interacts with FEM1B. In terms of tissue distribution, widely expressed with highest levels in testis.

The protein localises to the endoplasmic reticulum membrane. It is found in the golgi apparatus. Its subcellular location is the cis-Golgi network membrane. In Mus musculus (Mouse), this protein is Protein PHTF1.